Reading from the N-terminus, the 446-residue chain is Methylenetetrahydrofolate--tRNA-(uracil-5-)-methyltransferase TrmFO (446 aa).

Glycine 8–glycine 13 is an FAD binding site.

The protein belongs to the MnmG family. TrmFO subfamily. FAD serves as cofactor.

The protein localises to the cytoplasm. It catalyses the reaction uridine(54) in tRNA + (6R)-5,10-methylene-5,6,7,8-tetrahydrofolate + NADH + H(+) = 5-methyluridine(54) in tRNA + (6S)-5,6,7,8-tetrahydrofolate + NAD(+). The enzyme catalyses uridine(54) in tRNA + (6R)-5,10-methylene-5,6,7,8-tetrahydrofolate + NADPH + H(+) = 5-methyluridine(54) in tRNA + (6S)-5,6,7,8-tetrahydrofolate + NADP(+). In terms of biological role, catalyzes the folate-dependent formation of 5-methyl-uridine at position 54 (M-5-U54) in all tRNAs. The chain is Methylenetetrahydrofolate--tRNA-(uracil-5-)-methyltransferase TrmFO from Paracoccus denitrificans (strain Pd 1222).